Consider the following 518-residue polypeptide: Ethanolamine kinase (518 aa).

Residues 1–19 (MGTETKSNSYTGQISTSGG) are compositionally biased toward polar residues. Residues 1–88 (MGTETKSNSY…DIRAKPEDKS (88 aa)) are disordered. Residues 33 to 68 (QTVNQQTLSLSQSNQVQNQLNSHSNSNSYPNPSGSE) are compositionally biased toward low complexity. Residues 69-88 (NKNENEQNSRDIRAKPEDKS) show a composition bias toward basic and acidic residues. Phosphoserine occurs at positions 190 and 194.

The protein belongs to the choline/ethanolamine kinase family.

It localises to the cytoplasm. It catalyses the reaction ethanolamine + ATP = phosphoethanolamine + ADP + H(+). The protein operates within phospholipid metabolism; phosphatidylethanolamine biosynthesis; phosphatidylethanolamine from ethanolamine: step 1/3. Its function is as follows. Highly specific for ethanolamine phosphorylation. May be a rate-controlling step in phosphatidylethanolamine biosynthesis. The polypeptide is Ethanolamine kinase (eas) (Drosophila melanogaster (Fruit fly)).